A 162-amino-acid polypeptide reads, in one-letter code: Cyclic pyranopterin monophosphate synthase (162 aa).

Substrate is bound by residues 75-77 (LCH) and 113-114 (ME). The active site involves aspartate 128.

It belongs to the MoaC family. In terms of assembly, homohexamer; trimer of dimers.

It carries out the reaction (8S)-3',8-cyclo-7,8-dihydroguanosine 5'-triphosphate = cyclic pyranopterin phosphate + diphosphate. It participates in cofactor biosynthesis; molybdopterin biosynthesis. In terms of biological role, catalyzes the conversion of (8S)-3',8-cyclo-7,8-dihydroguanosine 5'-triphosphate to cyclic pyranopterin monophosphate (cPMP). The protein is Cyclic pyranopterin monophosphate synthase of Klebsiella pneumoniae (strain 342).